Reading from the N-terminus, the 872-residue chain is Tegument protein UL47 homolog (872 aa).

The interval 1-206 is disordered; that stretch reads MDQHHGVRGG…ENDTEVISDD (206 aa). The Nuclear localization signal motif lies at 13–33; that stretch reads IRRPRRSIETRSHPFRAAGNT. The span at 31–41 shows a compositional bias: polar residues; it reads GNTQRTYSTPR. Low complexity-rich tracts occupy residues 66-80 and 91-101; these read ESSTQSTSNNQPSTS and DDAPAQPQAPR. Composition is skewed to acidic residues over residues 110 to 134 and 177 to 204; these read PEEDSSSEEEDEEGPSQAPLDEEDQ and AEEEPESESESDMENYETYEENDTEVIS.

Belongs to the alphaherpesvirinae HHV-1 UL47 family. In terms of assembly, interacts with US3 kinase. Interacts with UL31 and UL34; these interactions seem important for efficient virion nuclear egress. Interacts with UL41/VHS. In terms of processing, phosphorylated by US3. This phosphorylation is required for proper nuclear localization. Post-translationally, O-glycosylated.

It localises to the virion tegument. Its subcellular location is the host nucleus. It is found in the host cytoplasm. Tegument protein that can bind to various RNA transcripts. Plays a role in the attenuation of selective viral and cellular mRNA degradation by modulating the activity of host shutoff RNase UL41/VHS. Also plays a role in the primary envelopment of virions in the perinuclear space, probably by interacting with two nuclear egress proteins UL31 and UL34. This Equus caballus (Horse) protein is Tegument protein UL47 homolog (13).